A 286-amino-acid polypeptide reads, in one-letter code: 4-diphosphocytidyl-2-C-methyl-D-erythritol kinase (286 aa).

Lysine 13 is an active-site residue. Residue 96–106 (PMGGGIGGGSS) participates in ATP binding. Residue aspartate 138 is part of the active site.

It belongs to the GHMP kinase family. IspE subfamily.

It carries out the reaction 4-CDP-2-C-methyl-D-erythritol + ATP = 4-CDP-2-C-methyl-D-erythritol 2-phosphate + ADP + H(+). The protein operates within isoprenoid biosynthesis; isopentenyl diphosphate biosynthesis via DXP pathway; isopentenyl diphosphate from 1-deoxy-D-xylulose 5-phosphate: step 3/6. Catalyzes the phosphorylation of the position 2 hydroxy group of 4-diphosphocytidyl-2C-methyl-D-erythritol. The polypeptide is 4-diphosphocytidyl-2-C-methyl-D-erythritol kinase (Pseudoalteromonas atlantica (strain T6c / ATCC BAA-1087)).